A 145-amino-acid polypeptide reads, in one-letter code: D-aminoacyl-tRNA deacylase (145 aa).

A Gly-cisPro motif, important for rejection of L-amino acids motif is present at residues 137–138; the sequence is GP.

It belongs to the DTD family. Homodimer.

It localises to the cytoplasm. The enzyme catalyses glycyl-tRNA(Ala) + H2O = tRNA(Ala) + glycine + H(+). The catalysed reaction is a D-aminoacyl-tRNA + H2O = a tRNA + a D-alpha-amino acid + H(+). An aminoacyl-tRNA editing enzyme that deacylates mischarged D-aminoacyl-tRNAs. Also deacylates mischarged glycyl-tRNA(Ala), protecting cells against glycine mischarging by AlaRS. Acts via tRNA-based rather than protein-based catalysis; rejects L-amino acids rather than detecting D-amino acids in the active site. By recycling D-aminoacyl-tRNA to D-amino acids and free tRNA molecules, this enzyme counteracts the toxicity associated with the formation of D-aminoacyl-tRNA entities in vivo and helps enforce protein L-homochirality. The chain is D-aminoacyl-tRNA deacylase from Proteus mirabilis (strain HI4320).